A 127-amino-acid chain; its full sequence is Large ribosomal subunit protein bL17 (127 aa).

The protein belongs to the bacterial ribosomal protein bL17 family. In terms of assembly, part of the 50S ribosomal subunit. Contacts protein L32.

The chain is Large ribosomal subunit protein bL17 from Lactobacillus helveticus (strain DPC 4571).